The primary structure comprises 385 residues: ATP phosphoribosyltransferase regulatory subunit (385 aa).

It belongs to the class-II aminoacyl-tRNA synthetase family. HisZ subfamily. Heteromultimer composed of HisG and HisZ subunits.

The protein resides in the cytoplasm. It functions in the pathway amino-acid biosynthesis; L-histidine biosynthesis; L-histidine from 5-phospho-alpha-D-ribose 1-diphosphate: step 1/9. Its function is as follows. Required for the first step of histidine biosynthesis. May allow the feedback regulation of ATP phosphoribosyltransferase activity by histidine. This is ATP phosphoribosyltransferase regulatory subunit from Bordetella petrii (strain ATCC BAA-461 / DSM 12804 / CCUG 43448).